The primary structure comprises 184 residues: Large ribosomal subunit protein uL5c (184 aa).

The protein belongs to the universal ribosomal protein uL5 family. As to quaternary structure, part of the 50S ribosomal subunit; contacts the 5S rRNA.

The protein localises to the plastid. Its subcellular location is the chloroplast. Binds 5S rRNA, forms part of the central protuberance of the 50S subunit. The chain is Large ribosomal subunit protein uL5c (rpl5) from Mesostigma viride (Green alga).